The chain runs to 230 residues: RING finger protein 141 (230 aa).

G2 carries the N-myristoyl glycine lipid modification. The RING-type zinc-finger motif lies at 155-192; sequence CCICMDGRADLILPCAHSFCQKCIDKWSDRHRNCPICR.

As to expression, isoform 1 is testis-specific. Isoform 2 is expressed in heart, brain, skeletal muscle, kidney, pancreas, lung, liver and testis. Isoform 3 is expressed in heart, liver, and kidney.

The protein resides in the membrane. Its function is as follows. May be involved in spermatogenesis. The protein is RING finger protein 141 (Rnf141) of Mus musculus (Mouse).